We begin with the raw amino-acid sequence, 368 residues long: Protein RecA (368 aa).

80 to 87 (GPESSGKT) serves as a coordination point for ATP. Positions 344-353 (NPTFTATPDS) are enriched in polar residues. Residues 344 to 368 (NPTFTATPDSENADNADDEFSEEEL) are disordered. The span at 354–368 (ENADNADDEFSEEEL) shows a compositional bias: acidic residues.

This sequence belongs to the RecA family.

The protein localises to the cytoplasm. Its function is as follows. Can catalyze the hydrolysis of ATP in the presence of single-stranded DNA, the ATP-dependent uptake of single-stranded DNA by duplex DNA, and the ATP-dependent hybridization of homologous single-stranded DNAs. It interacts with LexA causing its activation and leading to its autocatalytic cleavage. The protein is Protein RecA of Mannheimia haemolytica (Pasteurella haemolytica).